Here is a 412-residue protein sequence, read N- to C-terminus: [Pyruvate dehydrogenase (acetyl-transferring)] kinase isozyme 4, mitochondrial (412 aa).

The Histidine kinase domain maps to 138–368; it reads ILEYKDTCTV…DAIIYLKALS (231 aa). ATP-binding positions include 254-261, Asp293, 312-313, and 329-334; these read ELFKNAMR, ST, and GFGYGL.

It belongs to the PDK/BCKDK protein kinase family. As to quaternary structure, homodimer. Interacts with the pyruvate dehydrogenase complex subunit DLAT, and is part of the multimeric pyruvate dehydrogenase complex that contains multiple copies of pyruvate dehydrogenase (E1), dihydrolipoamide acetyltransferase (DLAT, E2) and lipoamide dehydrogenase (DLD, E3). As to expression, detected in skeletal muscle and heart.

Its subcellular location is the mitochondrion matrix. The catalysed reaction is L-seryl-[pyruvate dehydrogenase E1 alpha subunit] + ATP = O-phospho-L-seryl-[pyruvate dehydrogenase E1 alpha subunit] + ADP + H(+). In terms of biological role, kinase that plays a key role in regulation of glucose and fatty acid metabolism and homeostasis via phosphorylation of the pyruvate dehydrogenase subunits PDHA1 and PDHA2. This inhibits pyruvate dehydrogenase activity, and thereby regulates metabolite flux through the tricarboxylic acid cycle, down-regulates aerobic respiration and inhibits the formation of acetyl-coenzyme A from pyruvate. Inhibition of pyruvate dehydrogenase decreases glucose utilization and increases fat metabolism in response to prolonged fasting and starvation. Plays an important role in maintaining normal blood glucose levels under starvation, and is involved in the insulin signaling cascade. Via its regulation of pyruvate dehydrogenase activity, plays an important role in maintaining normal blood pH and in preventing the accumulation of ketone bodies under starvation. In the fed state, mediates cellular responses to glucose levels and to a high-fat diet. Regulates both fatty acid oxidation and de novo fatty acid biosynthesis. Plays a role in the generation of reactive oxygen species. Protects detached epithelial cells against anoikis. Plays a role in cell proliferation via its role in regulating carbohydrate and fatty acid metabolism. The sequence is that of [Pyruvate dehydrogenase (acetyl-transferring)] kinase isozyme 4, mitochondrial (PDK4) from Ictidomys tridecemlineatus (Thirteen-lined ground squirrel).